The following is a 432-amino-acid chain: Adenylosuccinate synthetase (432 aa).

GTP contacts are provided by residues 13–19 (GDEGKGK) and 41–43 (GHT). The active-site Proton acceptor is the aspartate 14. Mg(2+) contacts are provided by aspartate 14 and glycine 41. Residues 14–17 (DEGK), 39–42 (NAGH), threonine 131, arginine 145, glutamine 226, threonine 241, and arginine 305 contribute to the IMP site. The active-site Proton donor is the histidine 42. Substrate is bound at residue 301–307 (SVTGRAR). Residues arginine 307, 333-335 (KLD), and 416-418 (STG) contribute to the GTP site.

The protein belongs to the adenylosuccinate synthetase family. As to quaternary structure, homodimer. Mg(2+) is required as a cofactor.

It localises to the cytoplasm. The catalysed reaction is IMP + L-aspartate + GTP = N(6)-(1,2-dicarboxyethyl)-AMP + GDP + phosphate + 2 H(+). The protein operates within purine metabolism; AMP biosynthesis via de novo pathway; AMP from IMP: step 1/2. In terms of biological role, plays an important role in the de novo pathway of purine nucleotide biosynthesis. Catalyzes the first committed step in the biosynthesis of AMP from IMP. In Neisseria meningitidis serogroup C (strain 053442), this protein is Adenylosuccinate synthetase.